The chain runs to 666 residues: Translation factor guf1, mitochondrial (666 aa).

The N-terminal 44 residues, 1-44 (MRGCLQLGRWLSAAPRCQAASLRPPTVFPSYRYNRSFSTTTIYY), are a transit peptide targeting the mitochondrion. The tr-type G domain maps to 68–248 (ERFRNFCIVA…TVVEKVPAPI (181 aa)). GTP is bound by residues 77–84 (AHVDHGKS), 141–145 (DTPGH), and 195–198 (NKVD).

It belongs to the TRAFAC class translation factor GTPase superfamily. Classic translation factor GTPase family. LepA subfamily.

The protein resides in the mitochondrion inner membrane. The catalysed reaction is GTP + H2O = GDP + phosphate + H(+). Functionally, promotes mitochondrial protein synthesis. May act as a fidelity factor of the translation reaction, by catalyzing a one-codon backward translocation of tRNAs on improperly translocated ribosomes. Binds to mitochondrial ribosomes in a GTP-dependent manner. This is Translation factor guf1, mitochondrial (guf1) from Penicillium rubens (strain ATCC 28089 / DSM 1075 / NRRL 1951 / Wisconsin 54-1255) (Penicillium chrysogenum).